Consider the following 87-residue polypeptide: Small ribosomal subunit protein bS20 (87 aa).

Over residues 1 to 19 the composition is skewed to basic residues; sequence MANHKSALKRHRQSIKRNL. A disordered region spans residues 1–22; it reads MANHKSALKRHRQSIKRNLRNN.

The protein belongs to the bacterial ribosomal protein bS20 family.

Binds directly to 16S ribosomal RNA. In Maridesulfovibrio salexigens (strain ATCC 14822 / DSM 2638 / NCIMB 8403 / VKM B-1763) (Desulfovibrio salexigens), this protein is Small ribosomal subunit protein bS20.